The following is a 127-amino-acid chain: Fluoride-specific ion channel FluC (127 aa).

3 consecutive transmembrane segments (helical) span residues 28–48 (LALF…SLAM), 73–93 (TGVL…ALLI), and 98–118 (VGLA…GLFL). Na(+)-binding residues include G77 and T80.

This sequence belongs to the fluoride channel Fluc/FEX (TC 1.A.43) family.

Its subcellular location is the cell inner membrane. It catalyses the reaction fluoride(in) = fluoride(out). Its activity is regulated as follows. Na(+) is not transported, but it plays an essential structural role and its presence is essential for fluoride channel function. Fluoride-specific ion channel. Important for reducing fluoride concentration in the cell, thus reducing its toxicity. The sequence is that of Fluoride-specific ion channel FluC from Beijerinckia indica subsp. indica (strain ATCC 9039 / DSM 1715 / NCIMB 8712).